The chain runs to 267 residues: tRNA pseudouridine synthase A (267 aa).

Asp-51 serves as the catalytic Nucleophile. Tyr-109 lines the substrate pocket.

It belongs to the tRNA pseudouridine synthase TruA family. Homodimer.

It carries out the reaction uridine(38/39/40) in tRNA = pseudouridine(38/39/40) in tRNA. Formation of pseudouridine at positions 38, 39 and 40 in the anticodon stem and loop of transfer RNAs. This Staphylococcus carnosus (strain TM300) protein is tRNA pseudouridine synthase A.